We begin with the raw amino-acid sequence, 398 residues long: ATP-dependent RNA helicase eIF4A (398 aa).

Positions 25–53 (DSFDAMNLRAELLRGVYAYGFERPSAIQQ) match the Q motif motif. A Helicase ATP-binding domain is found at 56 to 226 (IMPVIKGSDV…TKFMRDPVRI (171 aa)). 69–76 (AQSGTGKT) provides a ligand contact to ATP. The DEAD box motif lies at 174–177 (DEAD). A Helicase C-terminal domain is found at 237-398 (GIKQFYIAVE…EMPMNVADLI (162 aa)).

This sequence belongs to the DEAD box helicase family. eIF4A subfamily. Component of the eIF4F complex, which composition varies with external and internal environmental conditions. It is composed of at least eIF4A, eIF4E and eIF4G.

The protein resides in the cytoplasm. It carries out the reaction ATP + H2O = ADP + phosphate + H(+). Its function is as follows. ATP-dependent RNA helicase which is a subunit of the eIF4F complex involved in cap recognition and is required for mRNA binding to ribosome. In the current model of translation initiation, eIF4A unwinds RNA secondary structures in the 5'-UTR of mRNAs which is necessary to allow efficient binding of the small ribosomal subunit, and subsequent scanning for the initiator codon. This chain is ATP-dependent RNA helicase eIF4A (TIF1), found in Coccidioides immitis (strain RS) (Valley fever fungus).